We begin with the raw amino-acid sequence, 450 residues long: MFNNLTQRFLKIIKKISNKGRLTEKNIKETLREIRIALLEADVALPVVKNFIPSIQKSVIGNQVNKSLTPGQELIKIVKKELTLILGKENHSLNLSVTPPAIILMIGLQGSGKTTTTAKLGQLIRTKYKKKVIVTSIDIYRLAAIKQLKMLSKQAKISFFPSNNTQSPKDIVQHAIQHAKLKFYDVLLIDTAGRLQIDKKMMNELLDVYNISHPIETFFVADAMFGQDSINVINEFNKYLPVSSFIITKTDSDTRAGIILSIKYLTKKPIKFIGTGEKLEELELFYPDRIASRILGMGDMLSLIENIENKIDKKHIKKFSNTIKKYNTFNFNDMLLHINQIKKIGGVNSILGKLPKTQTIFNSFQNNIDENILLKMKTIINSMTISERHQPELIKGSRKRRISLGSGIPIPEINQLLKQFNNIKKIMKTIKKGGVTKIMQGINNIIKNKF.

GTP is bound by residues 107-114 (GLQGSGKT), 190-194 (DTAGR), and 248-251 (TKTD).

This sequence belongs to the GTP-binding SRP family. SRP54 subfamily. As to quaternary structure, part of the signal recognition particle protein translocation system, which is composed of SRP and FtsY. SRP is a ribonucleoprotein composed of Ffh and a 4.5S RNA molecule.

It is found in the cytoplasm. It catalyses the reaction GTP + H2O = GDP + phosphate + H(+). Its function is as follows. Involved in targeting and insertion of nascent membrane proteins into the cytoplasmic membrane. Binds to the hydrophobic signal sequence of the ribosome-nascent chain (RNC) as it emerges from the ribosomes. The SRP-RNC complex is then targeted to the cytoplasmic membrane where it interacts with the SRP receptor FtsY. Interaction with FtsY leads to the transfer of the RNC complex to the Sec translocase for insertion into the membrane, the hydrolysis of GTP by both Ffh and FtsY, and the dissociation of the SRP-FtsY complex into the individual components. This is Signal recognition particle protein from Buchnera aphidicola subsp. Baizongia pistaciae (strain Bp).